Consider the following 562-residue polypeptide: Putative transport protein Spro_1639 (562 aa).

A run of 5 helical transmembrane segments spans residues 8–28, 37–57, 66–86, 94–114, and 158–178; these read LLNGNYILLLFVVLALGLCLG, LGNSIGVLVVSLLLGQQHFAI, FMLFIFCVGVEAGPNFFSIFF, MLALVMVGSAMVIAIGLGKLF, and HLSLGYALTYLIGLVSLIFGA. 2 consecutive RCK C-terminal domains span residues 202–288 and 290–373; these read LDTD…SFRN and KEVF…KIGF. The next 5 membrane-spanning stretches (helical) occupy residues 383–403, 406–426, 447–467, 475–495, and 541–561; these read LLAFCAFFIIGLLIGQITIQF, FSFGIGNAAGLLMAGIMLGFL, FGLMVFMAGVGLSAGAGIGNS, MLIAGLIVSLVPVVICFLFGA, and IANVLLTLAGSLIVVLWPGIL.

Belongs to the AAE transporter (TC 2.A.81) family. YbjL subfamily.

It localises to the cell membrane. The chain is Putative transport protein Spro_1639 from Serratia proteamaculans (strain 568).